Consider the following 91-residue polypeptide: Large ribosomal subunit protein uL23c (91 aa).

The protein belongs to the universal ribosomal protein uL23 family. Part of the 50S ribosomal subunit.

Its subcellular location is the plastid. It localises to the chloroplast. Binds to 23S rRNA. This chain is Large ribosomal subunit protein uL23c (rpl23), found in Chaetosphaeridium globosum (Charophycean green alga).